A 481-amino-acid chain; its full sequence is Beta-amyrin 16-beta-monooxygenase (481 aa).

Residues leucine 4–leucine 24 traverse the membrane as a helical segment. Residue cysteine 428 participates in heme binding.

Belongs to the cytochrome P450 family. Requires heme as cofactor. In terms of tissue distribution, highly expressed in roots. Expressed at very low levels in leaves and petals.

It localises to the membrane. It carries out the reaction beta-amyrin + reduced [NADPH--hemoprotein reductase] + O2 = maniladiol + oxidized [NADPH--hemoprotein reductase] + H2O + H(+). The enzyme catalyses oleanolate + reduced [NADPH--hemoprotein reductase] + O2 = cochalate + oxidized [NADPH--hemoprotein reductase] + H2O + H(+). Its function is as follows. Involved in triterpenoid saponin biosynthesis in roots. Catalyzes the hydroxylation of beta-amyrin at the C-16 beta position to form maniladiol. Is also able to oxidize oleanolat to cochalate. Has weak activity catalyzing the three-step oxidation at C-28 of beta-amyrin to form oleanolate. The polypeptide is Beta-amyrin 16-beta-monooxygenase (Platycodon grandiflorus (Balloon flower)).